Here is a 146-residue protein sequence, read N- to C-terminus: Large ribosomal subunit protein uL15 (146 aa).

Residues 1–64 (MQLNTIKPAI…MPMHRRLPKR (64 aa)) are disordered. Positions 30–39 (TATKGHKGQK) are enriched in basic residues.

This sequence belongs to the universal ribosomal protein uL15 family. Part of the 50S ribosomal subunit.

Functionally, binds to the 23S rRNA. In Geobacter sp. (strain M21), this protein is Large ribosomal subunit protein uL15.